Reading from the N-terminus, the 149-residue chain is Evolved beta-galactosidase subunit beta (149 aa).

In terms of assembly, heterooctamer of 4 alpha and 4 beta subunits.

In terms of biological role, required for full activity of the EbgA enzyme. Exact function not known. The protein is Evolved beta-galactosidase subunit beta (ebgC) of Escherichia coli O6:H1 (strain CFT073 / ATCC 700928 / UPEC).